A 343-amino-acid polypeptide reads, in one-letter code: Tetraacyldisaccharide 4'-kinase (343 aa).

55-62 (TVGGEGKT) contacts ATP.

Belongs to the LpxK family.

The catalysed reaction is a lipid A disaccharide + ATP = a lipid IVA + ADP + H(+). It participates in glycolipid biosynthesis; lipid IV(A) biosynthesis; lipid IV(A) from (3R)-3-hydroxytetradecanoyl-[acyl-carrier-protein] and UDP-N-acetyl-alpha-D-glucosamine: step 6/6. Transfers the gamma-phosphate of ATP to the 4'-position of a tetraacyldisaccharide 1-phosphate intermediate (termed DS-1-P) to form tetraacyldisaccharide 1,4'-bis-phosphate (lipid IVA). The chain is Tetraacyldisaccharide 4'-kinase from Chelativorans sp. (strain BNC1).